We begin with the raw amino-acid sequence, 463 residues long: Calcitonin gene-related peptide type 1 receptor (463 aa).

Residues 1–22 form the signal peptide; sequence MDKKHILCFLVLLPLNMALISA. Residues 23–138 are Extracellular-facing; sequence ESEEGVNQTD…STHEKVKTAL (116 aa). N-linked (GlcNAc...) asparagine glycosylation is found at Asn29, Asn65, Asn117, Asn122, Asn127, and Asn128. 3 disulfides stabilise this stretch: Cys47-Cys73, Cys64-Cys104, and Cys87-Cys126. The helical transmembrane segment at 139 to 163 threads the bilayer; sequence NLFYLTIIGHGLSIASLIISLIIFF. At 164–174 the chain is on the cytoplasmic side; sequence YFKSLSCQRIT. Residues 175-197 form a helical membrane-spanning segment; the sequence is LHKNLFFSFICNSIVTIIHLTAV. Over 198-208 the chain is Extracellular; that stretch reads ANNQALVATNP. A helical transmembrane segment spans residues 209 to 237; the sequence is VSCKVSQFIHLYLMGCNYFWMLCEGVYLH. At 238-251 the chain is on the cytoplasmic side; the sequence is TLIVVAVFAEKQHL. A helical transmembrane segment spans residues 252–272; that stretch reads MWYYFLGWGFPLLPACIHAIA. Residues 273 to 288 lie on the Extracellular side of the membrane; it reads RSLYYNDNCWISSDTH. A required for RAMP3 interaction region spans residues 287 to 288; that stretch reads TH. Residues 289-313 traverse the membrane as a helical segment; the sequence is LLYIIHGPICAALLVNLFFLLNIVR. At 314–328 the chain is on the cytoplasmic side; the sequence is VLITKLKVTHQVESN. A helical transmembrane segment spans residues 329-350; the sequence is LYMKAVRATLILVPLLGIEFVL. Residues 351–365 are Extracellular-facing; it reads FPWRPEGKVAEEVYD. Residues 366-386 traverse the membrane as a helical segment; it reads YVMHILMHFQGLLVATIFCFF. At 387–463 the chain is on the cytoplasmic side; sequence NGEVQAILRR…KSENMYDLVM (77 aa). A phosphoserine mark is found at Ser419 and Ser444.

It belongs to the G-protein coupled receptor 2 family. In terms of assembly, heterodimer of CALCRL and RAMP1; the receptor complex functions as CGRP receptor. Heterodimer of CALCRL and RAMP2 or CALCRL and RAMP3; the complexes function as adrenomedullin receptor. In terms of tissue distribution, expressed predominantly in the lung, thymus, heart and brain.

Its subcellular location is the cell membrane. G protein-coupled receptor which specificity is determined by its interaction with receptor-activity-modifying proteins (RAMPs). Together with RAMP1, form the receptor complex for calcitonin-gene-related peptides CALCA/CGRP1 and CALCB/CGRP2. Together with RAMP2 or RAMP3, function as receptor complexes for adrenomedullin (ADM and ADM2). Ligand binding causes a conformation change that triggers signaling via guanine nucleotide-binding proteins (G proteins) and modulates the activity of downstream effectors. Activates cAMP-dependent pathway. In Mus musculus (Mouse), this protein is Calcitonin gene-related peptide type 1 receptor.